The following is a 102-amino-acid chain: Small ribosomal subunit protein uS10 (102 aa).

It belongs to the universal ribosomal protein uS10 family. In terms of assembly, part of the 30S ribosomal subunit.

Involved in the binding of tRNA to the ribosomes. In Methanosarcina mazei (strain ATCC BAA-159 / DSM 3647 / Goe1 / Go1 / JCM 11833 / OCM 88) (Methanosarcina frisia), this protein is Small ribosomal subunit protein uS10.